A 642-amino-acid polypeptide reads, in one-letter code: 1-deoxy-D-xylulose-5-phosphate synthase (642 aa).

Thiamine diphosphate contacts are provided by residues histidine 79 and 120–122 (GHS). Aspartate 151 is a Mg(2+) binding site. Thiamine diphosphate-binding positions include 152–153 (GS), asparagine 180, tyrosine 290, and glutamate 372. Position 180 (asparagine 180) interacts with Mg(2+).

It belongs to the transketolase family. DXPS subfamily. In terms of assembly, homodimer. Mg(2+) is required as a cofactor. Thiamine diphosphate serves as cofactor.

The enzyme catalyses D-glyceraldehyde 3-phosphate + pyruvate + H(+) = 1-deoxy-D-xylulose 5-phosphate + CO2. It participates in metabolic intermediate biosynthesis; 1-deoxy-D-xylulose 5-phosphate biosynthesis; 1-deoxy-D-xylulose 5-phosphate from D-glyceraldehyde 3-phosphate and pyruvate: step 1/1. In terms of biological role, catalyzes the acyloin condensation reaction between C atoms 2 and 3 of pyruvate and glyceraldehyde 3-phosphate to yield 1-deoxy-D-xylulose-5-phosphate (DXP). The polypeptide is 1-deoxy-D-xylulose-5-phosphate synthase (Rhodospirillum centenum (strain ATCC 51521 / SW)).